Here is a 216-residue protein sequence, read N- to C-terminus: Pyrophosphatase PpaX (216 aa).

The active-site Nucleophile is Asp9.

It belongs to the HAD-like hydrolase superfamily. PpaX family. Mg(2+) serves as cofactor.

The catalysed reaction is diphosphate + H2O = 2 phosphate + H(+). Its function is as follows. Hydrolyzes pyrophosphate formed during P-Ser-HPr dephosphorylation by HPrK/P. Might play a role in controlling the intracellular pyrophosphate pool. The sequence is that of Pyrophosphatase PpaX from Bacillus cereus (strain Q1).